Consider the following 340-residue polypeptide: UDP-3-O-(3-hydroxymyristoyl)glucosamine N-acyltransferase (340 aa).

H239 serves as the catalytic Proton acceptor.

The protein belongs to the transferase hexapeptide repeat family. LpxD subfamily. Homotrimer.

The enzyme catalyses a UDP-3-O-[(3R)-3-hydroxyacyl]-alpha-D-glucosamine + a (3R)-hydroxyacyl-[ACP] = a UDP-2-N,3-O-bis[(3R)-3-hydroxyacyl]-alpha-D-glucosamine + holo-[ACP] + H(+). It catalyses the reaction UDP-3-O-[(3R)-3-hydroxytetradecanoyl]-alpha-D-glucosamine + (3R)-hydroxytetradecanoyl-[ACP] = UDP-2-N,3-O-bis[(3R)-3-hydroxytetradecanoyl]-alpha-D-glucosamine + holo-[ACP] + H(+). It functions in the pathway glycolipid biosynthesis; lipid IV(A) biosynthesis; lipid IV(A) from (3R)-3-hydroxytetradecanoyl-[acyl-carrier-protein] and UDP-N-acetyl-alpha-D-glucosamine: step 3/6. Functionally, catalyzes the N-acylation of UDP-3-O-(hydroxytetradecanoyl)glucosamine using 3-hydroxytetradecanoyl-ACP as the acyl donor. Is involved in the biosynthesis of lipid A, a phosphorylated glycolipid that anchors the lipopolysaccharide to the outer membrane of the cell. This chain is UDP-3-O-(3-hydroxymyristoyl)glucosamine N-acyltransferase, found in Yersinia enterocolitica.